The following is a 226-amino-acid chain: Protein DEHYDRATION-INDUCED 19 (226 aa).

The interval Phe158–Ala208 is disordered. A compositionally biased stretch (basic and acidic residues) spans Leu196–Arg205.

Belongs to the Di19 family.

The sequence is that of Protein DEHYDRATION-INDUCED 19 (DI19-1) from Oryza sativa subsp. japonica (Rice).